Reading from the N-terminus, the 197-residue chain is Probable chorismate pyruvate-lyase (197 aa).

Positions 66, 104, and 169 each coordinate substrate.

This sequence belongs to the UbiC family.

It localises to the cytoplasm. The enzyme catalyses chorismate = 4-hydroxybenzoate + pyruvate. It functions in the pathway cofactor biosynthesis; ubiquinone biosynthesis. Removes the pyruvyl group from chorismate, with concomitant aromatization of the ring, to provide 4-hydroxybenzoate (4HB) for the ubiquinone pathway. This chain is Probable chorismate pyruvate-lyase, found in Albidiferax ferrireducens (strain ATCC BAA-621 / DSM 15236 / T118) (Rhodoferax ferrireducens).